We begin with the raw amino-acid sequence, 314 residues long: Olfactory receptor 1 (314 aa).

The Extracellular portion of the chain corresponds to 1–29 (MTERNQTVISQFLLLGLPIPPEHQHVFYA). The N-linked (GlcNAc...) asparagine glycan is linked to Asn-5. Residues 30 to 50 (LFLSMYLTTVLGNLIIIILIL) traverse the membrane as a helical segment. At 51-59 (LDSHLHTPM) the chain is on the cytoplasmic side. Residues 60-81 (YLFLSNLSFSDLCFSSVTMPKL) traverse the membrane as a helical segment. Topologically, residues 82 to 97 (LQNMQSQVPSIPYAGC) are extracellular. A disulfide bridge links Cys-97 with Cys-179. The helical transmembrane segment at 98 to 118 (LSQIYFFLFFGDLGNFLLVAM) threads the bilayer. Topologically, residues 119–143 (AYDRYVAICFPLHYMSIMSPKLCVS) are cytoplasmic. The helical transmembrane segment at 144–164 (LVVLSWVLTTFHAMLHTLLMA) threads the bilayer. At 165 to 196 (RLSFCEDNVIPHFFCDMSALLKLACSDTRVNE) the chain is on the extracellular side. The helical transmembrane segment at 197–217 (VVIFIVVSLFLVLPFALIIMS) threads the bilayer. The Cytoplasmic segment spans residues 218–240 (YVRIVSSILKVPSSQGIYKAFST). A helical membrane pass occupies residues 241 to 261 (CGSHLSVVSLFYGTVIGLYLC). Over 262-271 (PSSNNSTVKE) the chain is Extracellular. N-linked (GlcNAc...) asparagine glycans are attached at residues Asn-265 and Asn-266. Residues 272-292 (TVMSLMYTVVTPMLNPFIYSL) form a helical membrane-spanning segment. The Cytoplasmic portion of the chain corresponds to 293 to 314 (RNRDIKGAMERIFCKRKIQLNL).

Belongs to the G-protein coupled receptor 1 family. Olfactory epithelium.

The protein localises to the cell membrane. Functionally, odorant receptor. Activated by a lily-derived aldehyde as well as other odorants. May signal through an inositol 1,4,5-trisphosphate (IP3) second messenger system. In Rattus norvegicus (Rat), this protein is Olfactory receptor 1.